The primary structure comprises 85 residues: Toxin AahP1005 (85 aa).

A signal peptide spans 1-19 (MNYLVMISLALLFMTGVES). The region spanning 21-83 (KDGYIVDDKN…VSTKKKGGCN (63 aa)) is the LCN-type CS-alpha/beta domain. Cystine bridges form between Cys31-Cys82, Cys35-Cys55, Cys41-Cys65, and Cys45-Cys67. Asparagine amide is present on Asn83.

This sequence belongs to the long (4 C-C) scorpion toxin superfamily. Sodium channel inhibitor family. Alpha subfamily. Expressed by the venom gland.

The protein resides in the secreted. In terms of biological role, alpha toxins bind voltage-independently at site-3 of sodium channels (Nav) and inhibit the inactivation of the activated channels, thereby blocking neuronal transmission. The sequence is that of Toxin AahP1005 from Androctonus australis (Sahara scorpion).